Here is a 387-residue protein sequence, read N- to C-terminus: Aminodeoxyfutalosine deaminase (387 aa).

A compositionally biased stretch (basic and acidic residues) spans Met-1–Thr-10. Positions Met-1–Glu-37 are disordered. Residues His-61 and His-63 each coordinate Zn(2+). Substrate is bound by residues Arg-116, Asp-183, and Gly-217. Residue His-244 participates in Zn(2+) binding. The active-site Proton donor is Glu-247. Asp-325 contributes to the Zn(2+) binding site.

Belongs to the metallo-dependent hydrolases superfamily. Adenosine and AMP deaminases family. The cofactor is Zn(2+).

It catalyses the reaction 6-amino-6-deoxyfutalosine + H2O + H(+) = futalosine + NH4(+). It functions in the pathway quinol/quinone metabolism; menaquinone biosynthesis. Functionally, catalyzes the deamination of aminodeoxyfutalosine (AFL) into futalosine (FL), a step in the biosynthesis of menaquinone (MK, vitamin K2). This is Aminodeoxyfutalosine deaminase from Streptomyces coelicolor (strain ATCC BAA-471 / A3(2) / M145).